The following is a 247-amino-acid chain: MTDNTSAPMYTLRGLQLIGWRDMQHALDFLCAADGQIKSGTLVAINAEKMLAIEDNAEVKGLIEAAEFKYADGISVVRSIRKKYPQARVSRVAGADLWEALMARAGAANTPVFLIGGKPEVLSQTEQKLRAQWNVNIVGSQDGYFKPEDRQALFERVRDSGAKIVTVAMGSPRQEILMRDCRMICPDALYMGVGGTYDVFTGHVKRAPKVWQNLGLEWLYRLLSQPSRITRQIKLLRYLAWHYTGKM.

This sequence belongs to the glycosyltransferase 26 family.

The enzyme catalyses UDP-N-acetyl-alpha-D-mannosaminouronate + N-acetyl-alpha-D-glucosaminyl-di-trans,octa-cis-undecaprenyl diphosphate = beta-D-ManNAcA-(1-&gt;4)-alpha-D-GlcNAc-di-trans,octa-cis-undecaprenyl diphosphate + UDP + H(+). It functions in the pathway bacterial outer membrane biogenesis; enterobacterial common antigen biosynthesis. Catalyzes the synthesis of Und-PP-GlcNAc-ManNAcA (Lipid II), the second lipid-linked intermediate involved in enterobacterial common antigen (ECA) synthesis. This Enterobacter sp. (strain 638) protein is UDP-N-acetyl-D-mannosaminuronic acid transferase.